We begin with the raw amino-acid sequence, 571 residues long: Cilia- and flagella-associated protein 52 (571 aa).

WD repeat units lie at residues 62 to 106, 109 to 150, 156 to 195, 288 to 327, 330 to 364, 366 to 405, 410 to 449, 451 to 490, 494 to 533, and 536 to 571; these read GHGN…LLAR, LHKG…AICG, LNVG…RKIW, QSQG…ETLI, CHFE…TSSN, AHRI…QKLE, EHKS…RNQM, LANT…VIRE, SLSG…VTHV, and GHSG…PYTS.

This sequence belongs to the CFAP52 family. Microtubule inner protein component of sperm flagellar doublet microtubules. Interacts with BRCA2. Interacts with the CCT chaperonin complex. Interacts with HSP70. Interacts with AK8. Interacts with CFAP45. Interacts with DNAI1. Interacts with IQDC.

The protein resides in the cytoplasm. The protein localises to the cytoskeleton. Its subcellular location is the cilium axoneme. It localises to the flagellum axoneme. Microtubule inner protein (MIP) part of the dynein-decorated doublet microtubules (DMTs) in cilia axoneme. Important for proper ciliary and flagellar beating. May act in cooperation with CFAP45 and axonemal dynein subunit DNAH11. May play a role in cell growth and/or survival. The sequence is that of Cilia- and flagella-associated protein 52 from Macaca fascicularis (Crab-eating macaque).